Reading from the N-terminus, the 299-residue chain is Non-structural protein V (299 aa).

The tract at residues 40-98 (SDNPGQEQATCKEEEAGASGLSKPCLSAIGSTEGGAPRIRGQGSGESDDDTETLGFPSR) is disordered. Positions 110 to 120 (YYVYDHSGEAV) are interaction with host STAT1. A compositionally biased stretch (low complexity) spans 134-145 (GLDGDSTLSGGD). Disordered stretches follow at residues 134–174 (GLDG…APIS) and 204–230 (PKLG…PIKK). Acidic residues predominate over residues 146-160 (NESENSDVDIGEPDT). The Zn(2+) site is built by H232, C251, C255, C267, C269, C272, C276, and C279.

This sequence belongs to the paramyxoviruses V protein family. Interacts with host IFIH1/MDA5 and DHX58/LGP2; these interactions are involved in the inhibition of the host type I interferon signaling pathway. Interacts with host TYK2; this interaction inhibits the type I interferon signaling pathway without affecting the type II pathway. Interacts with host IRF7; this interaction inhibits IRF7 translocation to the nucleus. Interacts with host CHUK. Interacts with host RELA/p65; this interaction inhibits the nuclear translocation of NF-KappaB. Interacts (via N-terminus) with host STAT1 and JAK1; these interactions inhibit STAT1 phosphorylation by Jak1 and thereby the type I interferon signaling pathway. Interacts (via C-terminus) with host STAT2; this interaction is involved in the inhibition of the host type I interferon signaling pathway. Forms a complex with host PPP1CA and PPP1CC; this interaction prevents dephosphorylation of host IFIH1/MDA5 and leads to the inhibition of the host type I interferon signaling pathway. Interacts with host IRF9; this interaction prevents the binding of IRF9 to STAT2 and thereby the type I interferon signaling pathway. Interacts with host RIGI regulatory protein (via CARDs domain) and host TRIM25 (via SPRY domain); these interactions prevent TRIM25-mediated ubiquitination of RIG-I and disrupts downstream RIG-I signaling.

The protein localises to the host cytoplasm. Its function is as follows. Plays an essential role in the inhibition of host immune response. Prevents the establishment of cellular antiviral state by blocking interferon-alpha/beta (IFN-alpha/beta) production and signaling pathway. Interacts with host IFIH1/MDA5 and DHX58/LGP2 to inhibit the transduction pathway involved in the activation of IFN-beta promoter, thus protecting the virus against cell antiviral state. Blocks the type I interferon signaling pathway by interacting with host TYK2 and thereby inhibiting downstream STAT1 and STAT2 phosphorylation. Blocks the type I interferon signaling pathway by disrupting the RIG-I signaling pathway. Moderately affects the type II interferon signaling. Prevents PP1alpha/gamma-mediated dephosphorylation of host IFIH1/MDA5 and thus blocks its activation. The chain is Non-structural protein V (P/V) from Measles virus (strain IP-3-Ca) (MeV).